Here is a 424-residue protein sequence, read N- to C-terminus: MGITIVLGSQWGDEGKGKITDMLSQEATLCCRAAGGHNAGHTIVHDNITYDFHILPSGLVSPKCVNLIGAGTVVHVPSFFKELASLEGKGLKGAGKRIFISDRAHVCFDLHSVVDGLEEARLGGRKVGTTGKGIGPCYSDKAARRGVRVGEIMDEAVFERKLRTLHAGYTARFGDLEYDVEEEIGRFKEYRQRLVPYIVDQLAFFKQYKDSPNTLVEGANALMLDLDHGTYPYVTSSSTGLGGAVQALSLNPASITSIIGVVKAYTTRVGSGPFPSEQLNEYGDKLQSVGREFGVTTGRRRRCGWFDLVLCRYSHAINHYTALNLTKLDVLDDFDEIKVGVAYVLPDGTRLTDTYPADAAVQENVKVEYVTLPGWKSNTMGVQKYEDLPANARAYIEYIERELGGVPVKWIGTGPARDHMICRE.

Residues G12–K18 and G40–T42 each bind GTP. The active-site Proton acceptor is D13. Mg(2+) is bound by residues D13 and G40. IMP is bound by residues D13 to K16, N38 to H41, T130, R144, N220, T235, and R299. The Proton donor role is filled by H41. V295–R301 is a binding site for substrate. GTP-binding positions include R301, K327–D329, and G412–G414.

The protein belongs to the adenylosuccinate synthetase family. In terms of assembly, homodimer. The cofactor is Mg(2+).

It localises to the cytoplasm. It catalyses the reaction IMP + L-aspartate + GTP = N(6)-(1,2-dicarboxyethyl)-AMP + GDP + phosphate + 2 H(+). The protein operates within purine metabolism; AMP biosynthesis via de novo pathway; AMP from IMP: step 1/2. Plays an important role in the de novo pathway and in the salvage pathway of purine nucleotide biosynthesis. Catalyzes the first committed step in the biosynthesis of AMP from IMP. The sequence is that of Adenylosuccinate synthetase from Aspergillus clavatus (strain ATCC 1007 / CBS 513.65 / DSM 816 / NCTC 3887 / NRRL 1 / QM 1276 / 107).